Consider the following 240-residue polypeptide: Uridylate kinase (240 aa).

Residue 12 to 15 coordinates ATP; sequence KLSG. Residue Gly-54 participates in UMP binding. Gly-55 and Arg-59 together coordinate ATP. UMP is bound by residues Asp-74 and 135 to 142; that span reads TGNPFFTT. ATP-binding residues include Thr-162, Tyr-168, and Asp-171.

It belongs to the UMP kinase family. Homohexamer.

The protein localises to the cytoplasm. It carries out the reaction UMP + ATP = UDP + ADP. The protein operates within pyrimidine metabolism; CTP biosynthesis via de novo pathway; UDP from UMP (UMPK route): step 1/1. Its activity is regulated as follows. Inhibited by UTP. Functionally, catalyzes the reversible phosphorylation of UMP to UDP. The protein is Uridylate kinase of Xanthomonas oryzae pv. oryzae (strain KACC10331 / KXO85).